We begin with the raw amino-acid sequence, 360 residues long: Heme A synthase (360 aa).

9 helical membrane-spanning segments follow: residues 29–49 (WLFA…ATRL), 111–131 (FLGR…WWTG), 139–159 (LGLL…WIMV), 175–195 (LAAH…LAAG), 210–230 (LTAL…GLVA), 242–262 (PLMD…TPWI), 269–289 (VALV…VAAL), 309–329 (AILG…LLAV), and 330–350 (PLWA…MAAV). His-276 is a binding site for heme. Residue His-337 coordinates heme.

Belongs to the COX15/CtaA family. Type 2 subfamily. Interacts with CtaB. Heme b serves as cofactor.

Its subcellular location is the cell membrane. It catalyses the reaction Fe(II)-heme o + 2 A + H2O = Fe(II)-heme a + 2 AH2. It functions in the pathway porphyrin-containing compound metabolism; heme A biosynthesis; heme A from heme O: step 1/1. Functionally, catalyzes the conversion of heme O to heme A by two successive hydroxylations of the methyl group at C8. The first hydroxylation forms heme I, the second hydroxylation results in an unstable dihydroxymethyl group, which spontaneously dehydrates, resulting in the formyl group of heme A. In Methylobacterium nodulans (strain LMG 21967 / CNCM I-2342 / ORS 2060), this protein is Heme A synthase.